Reading from the N-terminus, the 590-residue chain is MALSMLSSIPNLITHTRLPIIIKSSSCKASPRGIKVKIGNSNCEEIIVRRTANYHPTIWDYDYVQSLRSDYVGETYTRRLDKLKRDVKPMLGKVKKPLDQLELIDVLQRLGIYYHFKDEIKRILNGIYNQYNRHEEWQKDDLYATALEFRLLRQHGYDVPQDVFSRFKDDTGSFKACLCEDMKGMLCLYEASYLCVQGESTMEQARDFAHRHLGKGLEQNIDQNLAIEVKHALELPLHWRMPRLEARWFIDVYEKRQDMNPILLEFAKLDFNMVQATHQEDLRHMSSWWSSTRLGEKLNFARDRLMENFLWTVGVIFEPQYGYCRRMSTKVNTLITIIDDVYDVYGTMDELELFTDVVDRWDINAMDPLPEYMKLCFLALYNSTNEMAYDALKEHGLHIVSYLRKAWSDLCKSYLLEAKWYYSRYTPSLQEYISNSWISISGPVILVHAYFLVANPITKEALQSLERYHNIIRWSSMILRLSDDLGTSLDELKRGDVPKSIQCYMYETGASEEDARKHTSYLIGETWKKLNEDGAVESPFPETFIGIAMNLARMAQCMYQHGDGHGIEYGETEDRVLSLLVEPIPSLSSE.

5 residues coordinate Mg(2+): Asp-339, Asp-343, Asp-483, Thr-487, and Glu-491. The short motif at 339-343 is the DDXXD motif element; that stretch reads DDVYD.

This sequence belongs to the terpene synthase family. Mg(2+) is required as a cofactor.

The catalysed reaction is (2E)-geranyl diphosphate + H2O = (S)-alpha-terpineol + diphosphate. The protein operates within secondary metabolite biosynthesis; terpenoid biosynthesis. Functionally, mediates the conversion of geranyl diphosphate into alpha-terpineol, a monoterpenol. Monoterpenols contribute to the final grape and wine aroma and flavor. Also forms some 1,8-cineole and traces of other monoterpenoids. The polypeptide is (-)-alpha-terpineol synthase (Vitis vinifera (Grape)).